The following is a 312-amino-acid chain: MLLGGRPLHLLVLGVMGAYAGLGAYYATVARLPHPVVYAALPLGEDAAGGAPDWEAFNATAIYVAPNETDALSPALRDRARVVYARRDCRAYLWDVHFRLAAVAWLLYAAFVYARQERRMFGPFRDPAEFLTPEKYTLNYAASVLAATVIGCSYTKFAWYMAELATRRAALSRDLREDPITLAHRHPTLIALILLELGLRLGARMALFTTLGVTRAPCALVFPLYARALVWIFVLAVGALELLAATLPHIARVSGATATPARSDGGRAALGVCGACCSTVLAGIFAKALYLCLLVGGVLLFLHYERHITIFG.

Positions 1–20 (MLLGGRPLHLLVLGVMGAYA) are cleaved as a signal peptide. The Extracellular portion of the chain corresponds to 21-91 (GLGAYYATVA…VVYARRDCRA (71 aa)). N58 and N67 each carry an N-linked (GlcNAc...) asparagine; by host glycan. The helical transmembrane segment at 92–112 (YLWDVHFRLAAVAWLLYAAFV) threads the bilayer. Topologically, residues 113-187 (YARQERRMFG…DPITLAHRHP (75 aa)) are cytoplasmic. A helical transmembrane segment spans residues 188 to 208 (TLIALILLELGLRLGARMALF). Residues 209–227 (TTLGVTRAPCALVFPLYAR) are Extracellular-facing. A helical transmembrane segment spans residues 228 to 248 (ALVWIFVLAVGALELLAATLP). Residues 249 to 280 (HIARVSGATATPARSDGGRAALGVCGACCSTV) lie on the Cytoplasmic side of the membrane. Residues 281 to 301 (LAGIFAKALYLCLLVGGVLLF) form a helical membrane-spanning segment. Over 302–312 (LHYERHITIFG) the chain is Extracellular.

Belongs to the alphaherpesvirinae glycoprotein K family. Interacts (via UL20 interaction region) with protein UL20 homolog (via N-terminus); this interaction probably plays a role in the coordinate transport of protein UL20 homolog and gK to the trans-Golgi network (TGN), and is required for the cell surface expression of gK. N-glycosylated.

It is found in the host cell membrane. The protein localises to the host endosome membrane. The protein resides in the host Golgi apparatus membrane. Its function is as follows. Glycoprotein that probably modulates membrane fusion events during secondary envelopment of cytoplasmic capsids that bud into specific trans-Golgi network (TGN)-derived membranes. The chain is Envelope glycoprotein K (gK) from Sus scrofa (Pig).